We begin with the raw amino-acid sequence, 390 residues long: Phosphoglycerate kinase (390 aa).

Substrate is bound by residues 21–23 (DLN), Arg36, 59–62 (HLGR), Arg114, and Arg147. ATP is bound by residues Lys198, Glu314, and 340–343 (GGDT).

Belongs to the phosphoglycerate kinase family. In terms of assembly, monomer.

Its subcellular location is the cytoplasm. The catalysed reaction is (2R)-3-phosphoglycerate + ATP = (2R)-3-phospho-glyceroyl phosphate + ADP. Its pathway is carbohydrate degradation; glycolysis; pyruvate from D-glyceraldehyde 3-phosphate: step 2/5. The polypeptide is Phosphoglycerate kinase (Buchnera aphidicola subsp. Acyrthosiphon pisum (strain 5A)).